A 333-amino-acid polypeptide reads, in one-letter code: Electron transfer flavoprotein subunit alpha, mitochondrial (333 aa).

Residues Met-1–Phe-19 constitute a mitochondrion transit peptide. The tract at residues Gln-20–Leu-204 is domain I. N6-acetyllysine; alternate is present on Lys-59. At Lys-59 the chain carries N6-succinyllysine; alternate. Lys-62 is modified (N6-acetyllysine). An N6-acetyllysine; alternate modification is found at Lys-69. Residue Lys-69 is modified to N6-succinyllysine; alternate. Lys-75 bears the N6-acetyllysine mark. The residue at position 93 (Thr-93) is a Phosphothreonine. N6-acetyllysine is present on residues Lys-101 and Lys-139. A Phosphoserine modification is found at Ser-140. Residue Lys-158 is modified to N6-acetyllysine; alternate. Lys-158 is subject to N6-succinyllysine; alternate. Lys-164 carries the post-translational modification N6-acetyllysine. Lys-187 carries the N6-succinyllysine modification. Residue Lys-203 is modified to N6-acetyllysine; alternate. Lys-203 carries the post-translational modification N6-succinyllysine; alternate. Residues Thr-205–Lys-333 form a domain II region. At Lys-216 the chain carries N6-succinyllysine. Position 223 (Arg-223) interacts with FAD. 2 positions are modified to N6-acetyllysine; alternate: Lys-226 and Lys-232. 2 positions are modified to N6-succinyllysine; alternate: Lys-226 and Lys-232. Residues Ser-248, Val-263–Thr-266, Ser-281–His-286, and Asn-300 each bind FAD. N6-succinyllysine is present on Lys-301. Asp-318–Leu-319 lines the FAD pocket.

Belongs to the ETF alpha-subunit/FixB family. Heterodimer composed of ETFA and ETFB. Identified in a complex that contains ETFA, ETFB and ETFRF1. Interaction with ETFRF1 promotes dissociation of the bound FAD and loss of electron transfer activity. Interacts with TASOR. FAD is required as a cofactor.

It localises to the mitochondrion matrix. Its function is as follows. Heterodimeric electron transfer flavoprotein that accepts electrons from several mitochondrial dehydrogenases, including acyl-CoA dehydrogenases, glutaryl-CoA and sarcosine dehydrogenase. It transfers the electrons to the main mitochondrial respiratory chain via ETF-ubiquinone oxidoreductase (ETF dehydrogenase). Required for normal mitochondrial fatty acid oxidation and normal amino acid metabolism. The polypeptide is Electron transfer flavoprotein subunit alpha, mitochondrial (ETFA) (Macaca fascicularis (Crab-eating macaque)).